We begin with the raw amino-acid sequence, 381 residues long: Cytochrome b (381 aa).

A run of 4 helical transmembrane segments spans residues 34-54 (FGSH…FLAM), 78-99 (WLIR…YLHI), 114-134 (WNIG…GYVL), and 179-199 (FFAF…IHLL). Heme b contacts are provided by histidine 84 and histidine 98. Histidine 183 and histidine 197 together coordinate heme b. Histidine 202 provides a ligand contact to a ubiquinone. 4 helical membrane passes run 227–247 (YKDL…ALFM), 289–309 (LGGV…PLLH), 321–341 (MTQI…WIGG), and 348–368 (FIMV…IIMP).

It belongs to the cytochrome b family. In terms of assembly, the cytochrome bc1 complex contains 3 respiratory subunits (MT-CYB, CYC1 and UQCRFS1), 2 core proteins (UQCRC1 and UQCRC2) and probably 6 low-molecular weight proteins. It depends on heme b as a cofactor.

It localises to the mitochondrion inner membrane. Its function is as follows. Component of the ubiquinol-cytochrome c reductase complex (complex III or cytochrome b-c1 complex) that is part of the mitochondrial respiratory chain. The b-c1 complex mediates electron transfer from ubiquinol to cytochrome c. Contributes to the generation of a proton gradient across the mitochondrial membrane that is then used for ATP synthesis. This chain is Cytochrome b (mt-cyb), found in Carcharhinus porosus (Smalltail shark).